Here is a 1070-residue protein sequence, read N- to C-terminus: DNA-directed RNA polymerase subunit beta (1070 aa).

It belongs to the RNA polymerase beta chain family. In plastids the minimal PEP RNA polymerase catalytic core is composed of four subunits: alpha, beta, beta', and beta''. When a (nuclear-encoded) sigma factor is associated with the core the holoenzyme is formed, which can initiate transcription.

It localises to the plastid. Its subcellular location is the chloroplast. The enzyme catalyses RNA(n) + a ribonucleoside 5'-triphosphate = RNA(n+1) + diphosphate. Functionally, DNA-dependent RNA polymerase catalyzes the transcription of DNA into RNA using the four ribonucleoside triphosphates as substrates. The chain is DNA-directed RNA polymerase subunit beta from Solanum lycopersicum (Tomato).